A 130-amino-acid chain; its full sequence is Small ribosomal subunit protein uS9 (130 aa).

It belongs to the universal ribosomal protein uS9 family.

The sequence is that of Small ribosomal subunit protein uS9 from Geotalea uraniireducens (strain Rf4) (Geobacter uraniireducens).